A 72-amino-acid polypeptide reads, in one-letter code: Conotoxin LiC53 (72 aa).

Positions 1-23 (MEKLTSLLLVAALLMLTQTLIQG) are cleaved as a signal peptide. A propeptide spanning residues 24-41 (GGEDRPNKKFLQKIKSTA) is cleaved from the precursor. 3 cysteine pairs are disulfide-bonded: Cys-45/Cys-59, Cys-52/Cys-63, and Cys-58/Cys-68.

This sequence belongs to the conotoxin O2 superfamily. In terms of tissue distribution, expressed by the venom duct.

The protein resides in the secreted. This Conus lividus (Livid cone) protein is Conotoxin LiC53.